The primary structure comprises 649 residues: Replication protein E1 (649 aa).

Positions 87–89 (KRK) match the Nuclear localization signal motif. S93 and S107 each carry phosphoserine; by host. Positions 106-115 (ISPRLKAICI) match the Nuclear export signal motif. Residues 186-352 (ICQTPLTNIL…QTVLQHSFND (167 aa)) form a DNA-binding region region. Residues 451-601 (VEFMSFLTAL…FPFDENGNPV (151 aa)) form the SF3 helicase domain. ATP is bound at residue 477 to 484 (GAANTGKS). A Glycyl lysine isopeptide (Lys-Gly) (interchain with G-Cter in SUMO) cross-link involves residue K558. Residues 624–649 (EDEDKENDGDSLPTFKCVSGQNTNTL) are disordered.

This sequence belongs to the papillomaviridae E1 protein family. As to quaternary structure, can form hexamers. Interacts with E2 protein; this interaction increases E1 DNA binding specificity. Interacts with host DNA polymerase subunit POLA2. Interacts with host single stranded DNA-binding protein RPA1. Interacts with host TOP1; this interaction stimulates the enzymatic activity of TOP1. Phosphorylated. In terms of processing, sumoylated.

Its subcellular location is the host nucleus. It carries out the reaction Couples ATP hydrolysis with the unwinding of duplex DNA by translocating in the 3'-5' direction.. It catalyses the reaction ATP + H2O = ADP + phosphate + H(+). Functionally, ATP-dependent DNA 3'-5' helicase required for initiation of viral DNA replication. It forms a complex with the viral E2 protein. The E1-E2 complex binds to the replication origin which contains binding sites for both proteins. During the initial step, a dimer of E1 interacts with a dimer of protein E2 leading to a complex that binds the viral origin of replication with high specificity. Then, a second dimer of E1 displaces the E2 dimer in an ATP-dependent manner to form the E1 tetramer. Following this, two E1 monomers are added to each half of the site, which results in the formation of two E1 trimers on the viral ori. Subsequently, two hexamers will be created. The double hexamer acts as a bi-directional helicase machinery and unwinds the viral DNA and then recruits the host DNA polymerase to start replication. The sequence is that of Replication protein E1 from Human papillomavirus type 16.